We begin with the raw amino-acid sequence, 373 residues long: Chaperone protein DnaJ (373 aa).

The J domain occupies 5–70 (DYYEVLGVHR…QQRVIYDQYG (66 aa)). The CR-type zinc-finger motif lies at 136-214 (GLETKIQIPR…CHGSGRVRGK (79 aa)). Residues Cys-149, Cys-152, Cys-166, Cys-169, Cys-188, Cys-191, Cys-202, and Cys-205 each coordinate Zn(2+). CXXCXGXG motif repeat units follow at residues 149 to 156 (CGTCDGIG), 166 to 173 (CPTCQGAG), 188 to 195 (CPECNGEG), and 202 to 209 (CEECHGSG).

This sequence belongs to the DnaJ family. Homodimer. Zn(2+) is required as a cofactor.

The protein resides in the cytoplasm. Functionally, participates actively in the response to hyperosmotic and heat shock by preventing the aggregation of stress-denatured proteins and by disaggregating proteins, also in an autonomous, DnaK-independent fashion. Unfolded proteins bind initially to DnaJ; upon interaction with the DnaJ-bound protein, DnaK hydrolyzes its bound ATP, resulting in the formation of a stable complex. GrpE releases ADP from DnaK; ATP binding to DnaK triggers the release of the substrate protein, thus completing the reaction cycle. Several rounds of ATP-dependent interactions between DnaJ, DnaK and GrpE are required for fully efficient folding. Also involved, together with DnaK and GrpE, in the DNA replication of plasmids through activation of initiation proteins. The protein is Chaperone protein DnaJ of Syntrophotalea carbinolica (strain DSM 2380 / NBRC 103641 / GraBd1) (Pelobacter carbinolicus).